A 298-amino-acid polypeptide reads, in one-letter code: Phospholipase A1 (298 aa).

Cysteine 4 and cysteine 87 are joined by a disulfide. Residues asparagine 88 and asparagine 122 are each glycosylated (N-linked (GlcNAc...) asparagine). Serine 134 serves as the catalytic Nucleophile. The active-site Charge relay system is the aspartate 162. 2 disulfides stabilise this stretch: cysteine 173-cysteine 178 and cysteine 216-cysteine 225. The Charge relay system role is filled by histidine 227. Intrachain disulfides connect cysteine 242/cysteine 266, cysteine 243/cysteine 291, and cysteine 259/cysteine 264.

Belongs to the AB hydrolase superfamily. Lipase family. In terms of tissue distribution, expressed by the venom gland.

Its subcellular location is the secreted. The catalysed reaction is a 1,2-diacyl-sn-glycero-3-phosphocholine + H2O = a 2-acyl-sn-glycero-3-phosphocholine + a fatty acid + H(+). Functionally, catalyzes the hydrolysis of phosphatidylcholine with phospholipase A1 activity. May act as an allergen and induce hemolytic activity. This chain is Phospholipase A1, found in Vespula squamosa (Southern yellow jacket).